The following is a 1902-amino-acid chain: Putative surface cell antigen sca1 (1902 aa).

Residues 1-28 (MNKLTEQHLLKKSRFLKYSLLASISVGA) form the signal peptide. 5 disordered regions span residues 140–273 (GIEK…TFVP), 420–485 (QGVF…SRTA), 707–729 (TTTT…YSSS), 858–885 (NRRR…AWGN), and 1470–1548 (KSES…SDGD). Composition is skewed to polar residues over residues 146 to 159 (QSQN…TEQM) and 168 to 197 (TASS…SPEH). Residues 199-212 (TTAPGTPSSTPATP) are compositionally biased toward low complexity. Over residues 225–238 (LGANTPPNINTNSK) the composition is skewed to polar residues. The span at 246-264 (SSSGPQQQAVQSSSQVKSE) shows a compositional bias: low complexity. The segment covering 423–439 (FNKNKSSGGNARKSSAG) has biased composition (polar residues). Residues 445-482 (KKQEAQKQLSEIKKQEKAIKTASDKAKEVAASAKKETS) show a composition bias toward basic and acidic residues. The span at 863-874 (RDGETSKQRTVD) shows a compositional bias: basic and acidic residues. A compositionally biased stretch (low complexity) spans 1491–1507 (LSSLPALASSNESALAL). Residues 1521–1538 (SSEDEESYDSGFEEEEET) show a composition bias toward acidic residues. An Autotransporter domain is found at 1618–1902 (ESHIKRGLWM…QGSVKLKVNL (285 aa)).

Its subcellular location is the cell outer membrane. This is Putative surface cell antigen sca1 (sca1) from Rickettsia conorii (strain ATCC VR-613 / Malish 7).